We begin with the raw amino-acid sequence, 392 residues long: Phosphoglycerate kinase (392 aa).

Substrate contacts are provided by residues 21 to 23 (DMN), Arg-36, 59 to 62 (HLGR), Arg-114, and Arg-147. Residues Lys-198, Glu-320, and 346 to 349 (GGDT) contribute to the ATP site.

Belongs to the phosphoglycerate kinase family. In terms of assembly, monomer.

The protein localises to the cytoplasm. It catalyses the reaction (2R)-3-phosphoglycerate + ATP = (2R)-3-phospho-glyceroyl phosphate + ADP. Its pathway is carbohydrate degradation; glycolysis; pyruvate from D-glyceraldehyde 3-phosphate: step 2/5. The protein is Phosphoglycerate kinase (pgk) of Neisseria meningitidis serogroup B (strain ATCC BAA-335 / MC58).